The following is a 159-amino-acid chain: UPF0262 protein CCNA_02430 (159 aa).

This sequence belongs to the UPF0262 family.

This is UPF0262 protein CCNA_02430 from Caulobacter vibrioides (strain NA1000 / CB15N) (Caulobacter crescentus).